Reading from the N-terminus, the 252-residue chain is Imidazole glycerol phosphate synthase subunit HisF (252 aa).

Residues aspartate 11 and aspartate 130 contribute to the active site.

Belongs to the HisA/HisF family. In terms of assembly, heterodimer of HisH and HisF.

Its subcellular location is the cytoplasm. It carries out the reaction 5-[(5-phospho-1-deoxy-D-ribulos-1-ylimino)methylamino]-1-(5-phospho-beta-D-ribosyl)imidazole-4-carboxamide + L-glutamine = D-erythro-1-(imidazol-4-yl)glycerol 3-phosphate + 5-amino-1-(5-phospho-beta-D-ribosyl)imidazole-4-carboxamide + L-glutamate + H(+). It participates in amino-acid biosynthesis; L-histidine biosynthesis; L-histidine from 5-phospho-alpha-D-ribose 1-diphosphate: step 5/9. In terms of biological role, IGPS catalyzes the conversion of PRFAR and glutamine to IGP, AICAR and glutamate. The HisF subunit catalyzes the cyclization activity that produces IGP and AICAR from PRFAR using the ammonia provided by the HisH subunit. This chain is Imidazole glycerol phosphate synthase subunit HisF, found in Rhodospirillum rubrum (strain ATCC 11170 / ATH 1.1.1 / DSM 467 / LMG 4362 / NCIMB 8255 / S1).